The chain runs to 633 residues: MSEPTANLQPASRTPLLDRVNSPEDLKRLGRDQLPQLAAELREEIVRVCSVGGLHLASSLGATDLIVALHYVLHSPRDRILFDVGHQAYAHKMLTGRRHLMHTVKKEGGLSGFTKVSESEHDAITVGHASTSLANALGMALARDALGQDYKVAAVIGDGSLTGGMALAALNTIGDLGRRMLIVLNDNEMSISENVGAINRFMRGLQVQKWFQEGEEAGKKAVQAVSKPLANLMSRAKSSTRHFFDPASVNPFAAMGVRYVGPVDGHNVQELVWLIERLVDLDGPTILHVVTKKGKGLSYAEADPIKWHGPGKFDPATGESVPSNAYSWSSAFGDAVTELARLDPRTFVITPAMREGSGLVRYSQVHPHRYLDVGIAEDVAVTTAAGMALQGMRPIVAIYSTFLQRAYDQVLHDVAIENLNVTFAIDRGGIVGADGATHNGVFDLSYLRSIPNVGIGLPKDAAELRGMLKYAQEHAGPFAIRYPRGNVERVPEGTWPELRWGTWERLQDGDDVVILAGGKALEYALKAARDLPGVGVVNARFVKPLDQGMLREVATKARALVTVEDNTVVGGFGSAVLEALSALGLRTPVRVLGIPDAFQDHATVESVHARAGIDAPAIRTVLAELGVDVPLEV.

Over residues Met-1–Ser-12 the composition is skewed to polar residues. The segment at Met-1–Asn-21 is disordered. Thiamine diphosphate-binding positions include His-86 and Gly-127–Ala-129. A Mg(2+)-binding site is contributed by Asp-158. Thiamine diphosphate is bound by residues Gly-159–Ser-160, Asn-187, and Glu-377. Asn-187 contacts Mg(2+).

It belongs to the transketolase family. DXPS subfamily. In terms of assembly, homodimer. Mg(2+) serves as cofactor. The cofactor is thiamine diphosphate.

It carries out the reaction D-glyceraldehyde 3-phosphate + pyruvate + H(+) = 1-deoxy-D-xylulose 5-phosphate + CO2. It participates in metabolic intermediate biosynthesis; 1-deoxy-D-xylulose 5-phosphate biosynthesis; 1-deoxy-D-xylulose 5-phosphate from D-glyceraldehyde 3-phosphate and pyruvate: step 1/1. Its function is as follows. Catalyzes the acyloin condensation reaction between C atoms 2 and 3 of pyruvate and glyceraldehyde 3-phosphate to yield 1-deoxy-D-xylulose-5-phosphate (DXP). The chain is 1-deoxy-D-xylulose-5-phosphate synthase from Deinococcus geothermalis (strain DSM 11300 / CIP 105573 / AG-3a).